Reading from the N-terminus, the 260-residue chain is Flavin-dependent thymidylate synthase (260 aa).

The region spanning 1–202 (MKIKLVSYSK…PRLFKYAGPN (202 aa)) is the ThyX domain. FAD is bound by residues serine 55, 79-81 (RHR), and glutamine 87. DUMP-binding positions include 76–79 (QLVR), 87–91 (QMSHR), and arginine 141. The short motif at 79–89 (RHRIASYTQMS) is the ThyX motif element. FAD contacts are provided by residues 157–159 (NAR) and asparagine 163. Residue arginine 168 coordinates dUMP. Arginine 168 serves as the catalytic Involved in ionization of N3 of dUMP, leading to its activation.

The protein belongs to the thymidylate synthase ThyX family. As to quaternary structure, homotetramer. The cofactor is FAD.

The catalysed reaction is dUMP + (6R)-5,10-methylene-5,6,7,8-tetrahydrofolate + NADPH + H(+) = dTMP + (6S)-5,6,7,8-tetrahydrofolate + NADP(+). It participates in pyrimidine metabolism; dTTP biosynthesis. Its function is as follows. Catalyzes the reductive methylation of 2'-deoxyuridine-5'-monophosphate (dUMP) to 2'-deoxythymidine-5'-monophosphate (dTMP) while utilizing 5,10-methylenetetrahydrofolate (mTHF) as the methyl donor, and NADPH and FADH(2) as the reductant. The chain is Flavin-dependent thymidylate synthase from Sulfolobus acidocaldarius (strain ATCC 33909 / DSM 639 / JCM 8929 / NBRC 15157 / NCIMB 11770).